A 176-amino-acid chain; its full sequence is Large ribosomal subunit protein uL6 (176 aa).

Over residues 151 to 169 the composition is skewed to basic and acidic residues; it reads RPPEPYKGRGIKYTDEHIQ. The interval 151 to 176 is disordered; that stretch reads RPPEPYKGRGIKYTDEHIQRKAGKTK.

The protein belongs to the universal ribosomal protein uL6 family. Part of the 50S ribosomal subunit.

In terms of biological role, this protein binds to the 23S rRNA, and is important in its secondary structure. It is located near the subunit interface in the base of the L7/L12 stalk, and near the tRNA binding site of the peptidyltransferase center. The protein is Large ribosomal subunit protein uL6 of Desulfosudis oleivorans (strain DSM 6200 / JCM 39069 / Hxd3) (Desulfococcus oleovorans).